Consider the following 303-residue polypeptide: N-acetyl-D-glucosamine kinase (303 aa).

Residues G4 to K11 and G133 to F140 each bind ATP. Residues H157, C177, C179, and C184 each coordinate Zn(2+).

It belongs to the ROK (NagC/XylR) family. NagK subfamily.

It catalyses the reaction N-acetyl-D-glucosamine + ATP = N-acetyl-D-glucosamine 6-phosphate + ADP + H(+). Its pathway is cell wall biogenesis; peptidoglycan recycling. Its function is as follows. Catalyzes the phosphorylation of N-acetyl-D-glucosamine (GlcNAc) derived from cell-wall degradation, yielding GlcNAc-6-P. The sequence is that of N-acetyl-D-glucosamine kinase from Escherichia coli O81 (strain ED1a).